Here is a 252-residue protein sequence, read N- to C-terminus: Imidazole glycerol phosphate synthase subunit HisF (252 aa).

Active-site residues include Asp12 and Asp131.

This sequence belongs to the HisA/HisF family. In terms of assembly, heterodimer of HisH and HisF.

The protein resides in the cytoplasm. It carries out the reaction 5-[(5-phospho-1-deoxy-D-ribulos-1-ylimino)methylamino]-1-(5-phospho-beta-D-ribosyl)imidazole-4-carboxamide + L-glutamine = D-erythro-1-(imidazol-4-yl)glycerol 3-phosphate + 5-amino-1-(5-phospho-beta-D-ribosyl)imidazole-4-carboxamide + L-glutamate + H(+). It functions in the pathway amino-acid biosynthesis; L-histidine biosynthesis; L-histidine from 5-phospho-alpha-D-ribose 1-diphosphate: step 5/9. Functionally, IGPS catalyzes the conversion of PRFAR and glutamine to IGP, AICAR and glutamate. The HisF subunit catalyzes the cyclization activity that produces IGP and AICAR from PRFAR using the ammonia provided by the HisH subunit. The polypeptide is Imidazole glycerol phosphate synthase subunit HisF (Thermus thermophilus (strain ATCC 27634 / DSM 579 / HB8)).